Here is a 197-residue protein sequence, read N- to C-terminus: Holliday junction branch migration complex subunit RuvA (197 aa).

The tract at residues 1–64 (MYEYIKGTYM…EDFIGLYGFG (64 aa)) is domain I. The segment at 65–143 (SKEELELFNK…VNLDEGIQTD (79 aa)) is domain II. The interval 144 to 149 (SNDIKV) is flexible linker. Residues 149 to 197 (VSSKILEEAKEALMSLGYSEKECEKALKNVEEKESLEIIIKESLKFLMN) form a domain III region.

The protein belongs to the RuvA family. In terms of assembly, homotetramer. Forms an RuvA(8)-RuvB(12)-Holliday junction (HJ) complex. HJ DNA is sandwiched between 2 RuvA tetramers; dsDNA enters through RuvA and exits via RuvB. An RuvB hexamer assembles on each DNA strand where it exits the tetramer. Each RuvB hexamer is contacted by two RuvA subunits (via domain III) on 2 adjacent RuvB subunits; this complex drives branch migration. In the full resolvosome a probable DNA-RuvA(4)-RuvB(12)-RuvC(2) complex forms which resolves the HJ.

The protein resides in the cytoplasm. In terms of biological role, the RuvA-RuvB-RuvC complex processes Holliday junction (HJ) DNA during genetic recombination and DNA repair, while the RuvA-RuvB complex plays an important role in the rescue of blocked DNA replication forks via replication fork reversal (RFR). RuvA specifically binds to HJ cruciform DNA, conferring on it an open structure. The RuvB hexamer acts as an ATP-dependent pump, pulling dsDNA into and through the RuvAB complex. HJ branch migration allows RuvC to scan DNA until it finds its consensus sequence, where it cleaves and resolves the cruciform DNA. In Hathewaya histolytica (Clostridium histolyticum), this protein is Holliday junction branch migration complex subunit RuvA.